Consider the following 138-residue polypeptide: Transcription antitermination protein NusB (138 aa).

Belongs to the NusB family.

In terms of biological role, involved in transcription antitermination. Required for transcription of ribosomal RNA (rRNA) genes. Binds specifically to the boxA antiterminator sequence of the ribosomal RNA (rrn) operons. The sequence is that of Transcription antitermination protein NusB from Leptospira borgpetersenii serovar Hardjo-bovis (strain JB197).